The chain runs to 124 residues: Fluoride-specific ion channel FluC 1 (124 aa).

The next 4 helical transmembrane spans lie at 7–27 (ALTLAAAGAGSVLRYLLGGWV), 35–55 (FPWGTLAVNALGCLGLGLLQG), 63–83 (LLLVLGSGLLAGFTTFSTLML), and 101–121 (IVGTLALGLFALSAGARAGAW).

It belongs to the fluoride channel Fluc/FEX (TC 1.A.43) family.

Its subcellular location is the cell membrane. The enzyme catalyses fluoride(in) = fluoride(out). Its function is as follows. Fluoride-specific ion channel. Important for reducing fluoride concentration in the cell, thus reducing its toxicity. The sequence is that of Fluoride-specific ion channel FluC 1 from Rubrobacter xylanophilus (strain DSM 9941 / JCM 11954 / NBRC 16129 / PRD-1).